The following is a 78-amino-acid chain: Putative membrane protein insertion efficiency factor (78 aa).

Belongs to the UPF0161 family.

It is found in the cell inner membrane. Could be involved in insertion of integral membrane proteins into the membrane. The polypeptide is Putative membrane protein insertion efficiency factor (Prochlorococcus marinus (strain MIT 9312)).